Reading from the N-terminus, the 187-residue chain is Protein GrpE (187 aa).

Positions 1-38 (MSEEKQTVEQNETEEQEIIEEQAAADEQQEETNESELL) are disordered. Acidic residues predominate over residues 11 to 34 (NETEEQEIIEEQAAADEQQEETNE).

The protein belongs to the GrpE family. As to quaternary structure, homodimer.

The protein resides in the cytoplasm. Participates actively in the response to hyperosmotic and heat shock by preventing the aggregation of stress-denatured proteins, in association with DnaK and GrpE. It is the nucleotide exchange factor for DnaK and may function as a thermosensor. Unfolded proteins bind initially to DnaJ; upon interaction with the DnaJ-bound protein, DnaK hydrolyzes its bound ATP, resulting in the formation of a stable complex. GrpE releases ADP from DnaK; ATP binding to DnaK triggers the release of the substrate protein, thus completing the reaction cycle. Several rounds of ATP-dependent interactions between DnaJ, DnaK and GrpE are required for fully efficient folding. The protein is Protein GrpE of Bacillus subtilis (strain 168).